Here is a 210-residue protein sequence, read N- to C-terminus: TBC1 domain family member 28 (210 aa).

Residues 101–210 enclose the Rab-GAP TBC domain; the sequence is VIPLAVRGRA…WVSLGGVATS (110 aa).

The protein is TBC1 domain family member 28 (TBC1D28) of Homo sapiens (Human).